The primary structure comprises 947 residues: Protein translocase subunit SecA (947 aa).

Residues Gln85, 103 to 107 (GEGKT), and Asp514 each bind ATP. The interval 864–947 (AAPSLDKGAQ…QAKGGRRRKK (84 aa)) is disordered. The segment covering 884-900 (PEIRAKGLDAPQRRDLH) has biased composition (basic and acidic residues). The span at 934–947 (ERRKQAKGGRRRKK) shows a compositional bias: basic residues.

It belongs to the SecA family. Monomer and homodimer. Part of the essential Sec protein translocation apparatus which comprises SecA, SecYEG and auxiliary proteins SecDF. Other proteins may also be involved.

Its subcellular location is the cell membrane. It localises to the cytoplasm. It carries out the reaction ATP + H2O + cellular proteinSide 1 = ADP + phosphate + cellular proteinSide 2.. Functionally, part of the Sec protein translocase complex. Interacts with the SecYEG preprotein conducting channel. Has a central role in coupling the hydrolysis of ATP to the transfer of proteins into and across the cell membrane, serving as an ATP-driven molecular motor driving the stepwise translocation of polypeptide chains across the membrane. The protein is Protein translocase subunit SecA of Streptomyces lividans.